Here is a 425-residue protein sequence, read N- to C-terminus: Adenylosuccinate synthetase (425 aa).

Residues 12 to 18 (GDEGKGK) and 40 to 42 (GHT) each bind GTP. Residue D13 is the Proton acceptor of the active site. Residues D13 and G40 each contribute to the Mg(2+) site. IMP contacts are provided by residues 13–16 (DEGK), 38–41 (NAGH), T130, R144, Q224, T239, and R301. The active-site Proton donor is the H41. Residue 297–303 (TVSNRRR) coordinates substrate. GTP-binding positions include R303, 329–331 (KLD), and 411–413 (STS).

This sequence belongs to the adenylosuccinate synthetase family. As to quaternary structure, homodimer. It depends on Mg(2+) as a cofactor.

Its subcellular location is the cytoplasm. It catalyses the reaction IMP + L-aspartate + GTP = N(6)-(1,2-dicarboxyethyl)-AMP + GDP + phosphate + 2 H(+). The protein operates within purine metabolism; AMP biosynthesis via de novo pathway; AMP from IMP: step 1/2. In terms of biological role, plays an important role in the de novo pathway of purine nucleotide biosynthesis. Catalyzes the first committed step in the biosynthesis of AMP from IMP. This is Adenylosuccinate synthetase from Wolbachia pipientis subsp. Culex pipiens (strain wPip).